The primary structure comprises 407 residues: Substance-P receptor (407 aa).

The Extracellular segment spans residues 1–31 (MDNVLPVDSDLFPNISTNTSEPNQFVQPAWQ). N-linked (GlcNAc...) asparagine glycosylation is found at N14 and N18. The chain crosses the membrane as a helical span at residues 32 to 54 (IVLWAAAYTVIVVTSVVGNVVVM). Over 55-64 (WIILAHKRMR) the chain is Cytoplasmic. The helical transmembrane segment at 65 to 86 (TVTNYFLVNLAFAEASMAAFNT) threads the bilayer. Topologically, residues 87–106 (VVNFTYAVHNEWYYGLFYCK) are extracellular. C105 and C180 are disulfide-bonded. A helical membrane pass occupies residues 107–128 (FHNFFPIAAVFASIYSMTAVAF). The Cytoplasmic segment spans residues 129–148 (DRYMAIIHPLQPRLSATATK). A helical transmembrane segment spans residues 149–169 (VVICVIWVLALLLAFPQGYYS). Topologically, residues 170–194 (TTETMPGRVVCMIEWPSHPDKIYEK) are extracellular. The chain crosses the membrane as a helical span at residues 195–219 (VYHICVTVLIYFLPLLVIGYAYTVV). The Cytoplasmic segment spans residues 220 to 248 (GITLWASEIPGDSSDRYHEQVSAKRKVVK). Residues 249–270 (MMIVVVCTFAICWLPFHIFFLL) form a helical membrane-spanning segment. The Extracellular portion of the chain corresponds to 271-283 (PYINPDLYLKKFI). The chain crosses the membrane as a helical span at residues 284–308 (QQVYLAIMWLAMSSTMYNPIIYCCL). The Cytoplasmic portion of the chain corresponds to 309–407 (NDRFRLGFKH…SSSFYSNMLS (99 aa)). C322 carries the S-palmitoyl cysteine lipid modification. A disordered region spans residues 363–407 (GAHEEDPEEGPKATPSSLDLTSNGSSRSNSKTVTESSSFYSNMLS). Residues 376-407 (TPSSLDLTSNGSSRSNSKTVTESSSFYSNMLS) are compositionally biased toward polar residues.

This sequence belongs to the G-protein coupled receptor 1 family. Interacts with ARRB1.

The protein localises to the cell membrane. This is a receptor for the tachykinin neuropeptide substance P. It is probably associated with G proteins that activate a phosphatidylinositol-calcium second messenger system. The rank order of affinity of this receptor to tachykinins is: substance P &gt; substance K &gt; neuromedin-K. This chain is Substance-P receptor (TACR1), found in Cavia porcellus (Guinea pig).